The primary structure comprises 282 residues: Succinate dehydrogenase [ubiquinone] iron-sulfur subunit, mitochondrial (282 aa).

The transit peptide at 1–26 directs the protein to the mitochondrion; the sequence is MAAVVFSLRRSGPVLRLSGALQVSRG. The region spanning 42-135 is the 2Fe-2S ferredoxin-type domain; the sequence is KKFAIYRWDP…VSKIYPLPHM (94 aa). Residues cysteine 95, cysteine 100, cysteine 103, and cysteine 115 each coordinate [2Fe-2S] cluster. Positions 178–208 constitute a 4Fe-4S ferredoxin-type domain; sequence DRDKLDGLYECILCACCSTSCPSYWWNADKY. [4Fe-4S] cluster is bound by residues cysteine 188, cysteine 191, and cysteine 194. Cysteine 198 provides a ligand contact to [3Fe-4S] cluster. Tryptophan 203 is an a ubiquinone binding site. Positions 245 and 251 each coordinate [3Fe-4S] cluster. Cysteine 255 lines the [4Fe-4S] cluster pocket.

This sequence belongs to the succinate dehydrogenase/fumarate reductase iron-sulfur protein family. As to quaternary structure, component of complex II composed of four subunits: the flavoprotein (FP) sdha, iron-sulfur protein (IP) sdhb, and a cytochrome b composed of sdhc and sdhd. It depends on [2Fe-2S] cluster as a cofactor. [3Fe-4S] cluster is required as a cofactor. The cofactor is [4Fe-4S] cluster.

The protein resides in the mitochondrion inner membrane. The enzyme catalyses a quinone + succinate = fumarate + a quinol. It carries out the reaction (R)-malate + a quinone = enol-oxaloacetate + a quinol. The catalysed reaction is (S)-malate + a quinone = enol-oxaloacetate + a quinol. It participates in carbohydrate metabolism; tricarboxylic acid cycle; fumarate from succinate (eukaryal route): step 1/1. Enol-oxaloacetate inhibits the succinate dehydrogenase activity. Its function is as follows. Iron-sulfur protein (IP) subunit of the succinate dehydrogenase complex (mitochondrial respiratory chain complex II), responsible for transferring electrons from succinate to ubiquinone (coenzyme Q). SDH also oxidizes malate to the non-canonical enol form of oxaloacetate, enol-oxaloacetate. Enol-oxaloacetate, which is a potent inhibitor of the succinate dehydrogenase activity, is further isomerized into keto-oxaloacetate. The protein is Succinate dehydrogenase [ubiquinone] iron-sulfur subunit, mitochondrial (sdhb) of Xenopus laevis (African clawed frog).